The primary structure comprises 556 residues: Phenylalanine--tRNA ligase beta subunit (556 aa).

The 77-residue stretch at 269–345 folds into the B5 domain; the sequence is MEPEEVVYDV…MGYGYERIEP (77 aa). D323, D329, E332, and E333 together coordinate Mg(2+).

The protein belongs to the phenylalanyl-tRNA synthetase beta subunit family. Type 2 subfamily. As to quaternary structure, tetramer of two alpha and two beta subunits. The cofactor is Mg(2+).

The protein resides in the cytoplasm. The catalysed reaction is tRNA(Phe) + L-phenylalanine + ATP = L-phenylalanyl-tRNA(Phe) + AMP + diphosphate + H(+). This Thermofilum pendens (strain DSM 2475 / Hrk 5) protein is Phenylalanine--tRNA ligase beta subunit.